Here is a 295-residue protein sequence, read N- to C-terminus: Pyridoxal 5'-phosphate synthase subunit PdxS (295 aa).

D-ribose 5-phosphate is bound at residue D25. The active-site Schiff-base intermediate with D-ribose 5-phosphate is the K82. G154 serves as a coordination point for D-ribose 5-phosphate. R166 provides a ligand contact to D-glyceraldehyde 3-phosphate. D-ribose 5-phosphate contacts are provided by residues G215 and 236 to 237 (GS).

Belongs to the PdxS/SNZ family. In terms of assembly, in the presence of PdxT, forms a dodecamer of heterodimers.

The catalysed reaction is aldehydo-D-ribose 5-phosphate + D-glyceraldehyde 3-phosphate + L-glutamine = pyridoxal 5'-phosphate + L-glutamate + phosphate + 3 H2O + H(+). Its pathway is cofactor biosynthesis; pyridoxal 5'-phosphate biosynthesis. In terms of biological role, catalyzes the formation of pyridoxal 5'-phosphate from ribose 5-phosphate (RBP), glyceraldehyde 3-phosphate (G3P) and ammonia. The ammonia is provided by the PdxT subunit. Can also use ribulose 5-phosphate and dihydroxyacetone phosphate as substrates, resulting from enzyme-catalyzed isomerization of RBP and G3P, respectively. The sequence is that of Pyridoxal 5'-phosphate synthase subunit PdxS from Actinobacillus pleuropneumoniae serotype 3 (strain JL03).